Here is a 240-residue protein sequence, read N- to C-terminus: Axial regulator YABBY 3 (240 aa).

The C4-type zinc-finger motif lies at Cys30 to Cys57. The tract at residues Asp135–Val156 is disordered.

Belongs to the YABBY family. As to quaternary structure, interacts with SPL/NZZ. Interacts with SPEAR2. Binds to LUG and LUH; these complexes promote adaxial cell identity in leaves as well as embryonic shoot apical meristem (SAM) initiation and postembryonic SAM maintenance. In terms of tissue distribution, expressed in abaxial regions of lateral aerial organ primordia leading to cotyledons, leaves, flower meristems, sepals, petals, stamen and carpels, but not in roots.

It is found in the nucleus. Functionally, involved in the abaxial cell fate determination during embryogenesis and organogenesis. Regulates the initiation of embryonic shoot apical meristem (SAM) development. Contributes to the repression of KNOX genes (STM, KNAT1/BP and KNAT2) to avoid ectopic meristems. Binds DNA without sequence specificity. The chain is Axial regulator YABBY 3 (YAB3) from Arabidopsis thaliana (Mouse-ear cress).